Reading from the N-terminus, the 121-residue chain is Large ribosomal subunit protein uL14 (121 aa).

Belongs to the universal ribosomal protein uL14 family. Part of the 50S ribosomal subunit. Forms a cluster with proteins L3 and L19. In the 70S ribosome, L14 and L19 interact and together make contacts with the 16S rRNA in bridges B5 and B8.

Binds to 23S rRNA. Forms part of two intersubunit bridges in the 70S ribosome. The chain is Large ribosomal subunit protein uL14 from Porphyromonas gingivalis (strain ATCC 33277 / DSM 20709 / CIP 103683 / JCM 12257 / NCTC 11834 / 2561).